Reading from the N-terminus, the 164-residue chain is UPF0304 protein NT01EI_2691 (164 aa).

This sequence belongs to the UPF0304 family.

This is UPF0304 protein NT01EI_2691 from Edwardsiella ictaluri (strain 93-146).